Consider the following 172-residue polypeptide: 3-hydroxydecanoyl-[acyl-carrier-protein] dehydratase (172 aa).

Histidine 71 is a catalytic residue.

Belongs to the thioester dehydratase family. FabA subfamily. As to quaternary structure, homodimer.

Its subcellular location is the cytoplasm. It carries out the reaction a (3R)-hydroxyacyl-[ACP] = a (2E)-enoyl-[ACP] + H2O. It catalyses the reaction (3R)-hydroxydecanoyl-[ACP] = (2E)-decenoyl-[ACP] + H2O. The enzyme catalyses (2E)-decenoyl-[ACP] = (3Z)-decenoyl-[ACP]. It participates in lipid metabolism; fatty acid biosynthesis. Its function is as follows. Necessary for the introduction of cis unsaturation into fatty acids. Catalyzes the dehydration of (3R)-3-hydroxydecanoyl-ACP to E-(2)-decenoyl-ACP and then its isomerization to Z-(3)-decenoyl-ACP. Can catalyze the dehydratase reaction for beta-hydroxyacyl-ACPs with saturated chain lengths up to 16:0, being most active on intermediate chain length. The chain is 3-hydroxydecanoyl-[acyl-carrier-protein] dehydratase from Enterobacter sp. (strain 638).